A 184-amino-acid polypeptide reads, in one-letter code: U3 small nucleolar ribonucleoprotein protein IMP3 (184 aa).

The 67-residue stretch at 109–175 (RRLPTVLLKL…IKRHVLEYNE (67 aa)) folds into the S4 RNA-binding domain.

This sequence belongs to the universal ribosomal protein uS4 family. Part of the small subunit (SSU) processome, composed of more than 70 proteins and the RNA chaperone small nucleolar RNA (snoRNA) U3. Component of a heterotrimeric complex containing IMP3, IMP4 and MPHOSPH10. Interacts with MPHOSPH10.

It localises to the nucleus. The protein localises to the nucleolus. Its function is as follows. Component of the 60-80S U3 small nucleolar ribonucleoprotein (U3 snoRNP). Required for the early cleavages during pre-18S ribosomal RNA processing. Part of the small subunit (SSU) processome, first precursor of the small eukaryotic ribosomal subunit. During the assembly of the SSU processome in the nucleolus, many ribosome biogenesis factors, an RNA chaperone and ribosomal proteins associate with the nascent pre-rRNA and work in concert to generate RNA folding, modifications, rearrangements and cleavage as well as targeted degradation of pre-ribosomal RNA by the RNA exosome. In Homo sapiens (Human), this protein is U3 small nucleolar ribonucleoprotein protein IMP3.